The sequence spans 233 residues: Modulator of macroautophagy TMEM150B (233 aa).

Residues 1–7 are Cytoplasmic-facing; sequence MWGYLSL. The helical transmembrane segment at 8–28 threads the bilayer; it reads MPVFLAVWAISGVWIVFAIAV. Residues 29–51 are Extracellular-facing; the sequence is TNRTVDLSKGFPYISICGSFPPQ. N-linked (GlcNAc...) asparagine glycosylation occurs at Asn-30. Residues 52-72 form a helical membrane-spanning segment; it reads SCIFSQVLNMGAALAAWICIV. Residues 73–84 are Cytoplasmic-facing; sequence RYHQLRDWGVRR. A helical transmembrane segment spans residues 85 to 105; that stretch reads WPNQLILWTGLLCALGTSVVG. Residues 106 to 116 are Extracellular-facing; that stretch reads NFQEKNQRPTH. Residues 117–137 traverse the membrane as a helical segment; sequence LAGAFLAFILGNVYFWLQLLL. The Cytoplasmic portion of the chain corresponds to 138–155; the sequence is WRLKRLPQPGAAWIGPLR. The helical transmembrane segment at 156-176 threads the bilayer; that stretch reads LGLCSVCTILIVAMIVLHACS. At 177-185 the chain is on the extracellular side; the sequence is LRSVSAACE. A helical transmembrane segment spans residues 186-206; it reads WVVAMLLFALFGLLAVDFSAL. Residues 207-233 are Cytoplasmic-facing; that stretch reads ESCTLCVQPWPSLSPPPASPISLPVQL.

Belongs to the DRAM/TMEM150 family. In terms of tissue distribution, highly expressed in the colon and lung with comparatively high levels also detectable in the lymph nodes, placenta, duodenum, peripheral blood mononuclear cells and spleen.

It is found in the cell membrane. The protein localises to the endosome membrane. Its subcellular location is the cytoplasmic vesicle. It localises to the autophagosome membrane. Functionally, modulator of macroautophagy that causes accumulation of autophagosomes under basal conditions and enhances autophagic flux. Represses cell death and promotes long-term clonogenic survival of cells grown in the absence of glucose in a macroautophagy-independent manner. May have some role in extracellular matrix engulfment or growth factor receptor recycling, both of which can modulate cell survival. This is Modulator of macroautophagy TMEM150B from Homo sapiens (Human).